A 348-amino-acid polypeptide reads, in one-letter code: tRNA pseudouridine synthase D (348 aa).

F26 is a binding site for substrate. The active-site Nucleophile is the D79. Position 128 (N128) interacts with substrate. The TRUD domain maps to G154–L302. Residue F328 coordinates substrate.

Belongs to the pseudouridine synthase TruD family.

The enzyme catalyses uridine(13) in tRNA = pseudouridine(13) in tRNA. Its function is as follows. Responsible for synthesis of pseudouridine from uracil-13 in transfer RNAs. The chain is tRNA pseudouridine synthase D from Serratia proteamaculans (strain 568).